The primary structure comprises 119 residues: Large ribosomal subunit protein uL18 (119 aa).

The disordered stretch occupies residues 1–22 (MGHVEKVARRHKIKTRSKARGQ). Over residues 8-19 (ARRHKIKTRSKA) the composition is skewed to basic residues.

This sequence belongs to the universal ribosomal protein uL18 family. Part of the 50S ribosomal subunit; part of the 5S rRNA/L5/L18/L25 subcomplex. Contacts the 5S and 23S rRNAs.

This is one of the proteins that bind and probably mediate the attachment of the 5S RNA into the large ribosomal subunit, where it forms part of the central protuberance. The protein is Large ribosomal subunit protein uL18 of Chlorobium phaeobacteroides (strain BS1).